Consider the following 279-residue polypeptide: Putative E3 ubiquitin-protein ligase C36B7.05c (279 aa).

Residues Asp27–Ser122 form an FYVE-type zinc finger. The Zn(2+) site is built by Cys33, Cys36, Cys49, Cys52, Cys57, Cys60, Cys114, and Cys117. The residue at position 200 (Ser200) is a Phosphoserine. The segment at Cys230 to Ala273 adopts an RING-type; atypical zinc-finger fold.

It localises to the cytoplasm. The protein localises to the nucleus. The protein resides in the endosome membrane. Its subcellular location is the vacuole membrane. It carries out the reaction S-ubiquitinyl-[E2 ubiquitin-conjugating enzyme]-L-cysteine + [acceptor protein]-L-lysine = [E2 ubiquitin-conjugating enzyme]-L-cysteine + N(6)-ubiquitinyl-[acceptor protein]-L-lysine.. Its pathway is protein modification; protein ubiquitination. Functions as an E3 ubiquitin-protein ligase. Binds phospholipid vesicles containing phosphatidylinositol 3-phosphate. This is Putative E3 ubiquitin-protein ligase C36B7.05c from Schizosaccharomyces pombe (strain 972 / ATCC 24843) (Fission yeast).